The sequence spans 257 residues: uncharacterized protein (257 aa).

A signal peptide spans 1–22 (MGYLKRFALYISVMILMFAIAG). Cys23 carries the N-palmitoyl cysteine lipid modification. A lipid anchor (S-diacylglycerol cysteine) is attached at Cys23.

It belongs to the staphylococcal tandem lipoprotein family.

The protein resides in the cell membrane. This is an uncharacterized protein from Staphylococcus aureus (strain MRSA252).